The following is a 277-amino-acid chain: Large ribosomal subunit protein uL15c (277 aa).

The transit peptide at 1 to 67 (MATPLSISSN…FARPLVVVSQ (67 aa)) directs the protein to the chloroplast. The residue at position 68 (threonine 68) is an N-acetylthreonine. The segment at 81–125 (FRLDNLGPQPGSRKKQKRKGRGISAGQGASCGFGMRGQKSRSGPG) is disordered. The segment covering 92 to 101 (SRKKQKRKGR) has biased composition (basic residues). Over residues 103-115 (ISAGQGASCGFGM) the composition is skewed to gly residues.

Belongs to the universal ribosomal protein uL15 family. As to quaternary structure, part of the 50S ribosomal subunit.

The protein localises to the plastid. The protein resides in the chloroplast. This is Large ribosomal subunit protein uL15c (RPL15) from Arabidopsis thaliana (Mouse-ear cress).